Reading from the N-terminus, the 835-residue chain is Invasin (835 aa).

The region spanning 451–541 is the Big-1 domain; that stretch reads VITSEVTDDG…QQATVDVRFA (91 aa).

This sequence belongs to the intimin/invasin family.

Its subcellular location is the cell outer membrane. Its function is as follows. Invasin is a protein that allows enteric bacteria to penetrate cultured mammalian cells. The entry of invasin in the cell is mediated by binding several beta-1 chain integrins. The sequence is that of Invasin from Yersinia enterocolitica.